The chain runs to 168 residues: Phosphopantetheine adenylyltransferase (168 aa).

Residue T10 coordinates substrate. ATP-binding positions include 10–11 (TF) and H18. Substrate-binding residues include K42, L74, and R88. Residues 89-91 (GLR), E99, and 124-130 (NSFISST) each bind ATP.

This sequence belongs to the bacterial CoaD family. As to quaternary structure, homohexamer. Requires Mg(2+) as cofactor.

It is found in the cytoplasm. The catalysed reaction is (R)-4'-phosphopantetheine + ATP + H(+) = 3'-dephospho-CoA + diphosphate. Its pathway is cofactor biosynthesis; coenzyme A biosynthesis; CoA from (R)-pantothenate: step 4/5. In terms of biological role, reversibly transfers an adenylyl group from ATP to 4'-phosphopantetheine, yielding dephospho-CoA (dPCoA) and pyrophosphate. This chain is Phosphopantetheine adenylyltransferase, found in Shewanella frigidimarina (strain NCIMB 400).